The primary structure comprises 543 residues: Protein B602L (543 aa).

13 consecutive repeat copies span residues 161 to 164 (CAST), 165 to 168 (CAST), 169 to 172 (CAST), 173 to 176 (CAST), 177 to 180 (CADT), 181 to 184 (NVDT), 185 to 188 (CTDT), 189 to 192 (CAST), 193 to 196 (CADT), 197 to 200 (NVDT), 201 to 204 (CAST), 205 to 208 (CADT), and 209 to 212 (CAST). The interval 161-212 (CASTCASTCASTCASTCADTNVDTCTDTCASTCADTNVDTCASTCADTCAST) is 13 X 4 AA tandem repeats of [CN]-[ATV]-[DS]-T.

It belongs to the asfivirus B602L family.

It localises to the host cytoplasm. Plays an essential role in the assembly of the icosahedral capsid of the virus. Allows the assembly of 3 molecules of hexon protein p72 and formation of a thermostable trimer. The sequence is that of Protein B602L from African swine fever virus (isolate Pig/Kenya/KEN-50/1950) (ASFV).